A 287-amino-acid chain; its full sequence is Nucleotide-binding protein HEAR2885 (287 aa).

Residue 8–15 participates in ATP binding; that stretch reads GISGSGKS. 57 to 60 serves as a coordination point for GTP; the sequence is DVRS.

This sequence belongs to the RapZ-like family.

In terms of biological role, displays ATPase and GTPase activities. This is Nucleotide-binding protein HEAR2885 from Herminiimonas arsenicoxydans.